A 131-amino-acid chain; its full sequence is Glycine cleavage system H protein (131 aa).

In terms of domain architecture, Lipoyl-binding spans 24 to 106; the sequence is RAIVGVSDHA…YGEGWIMVIE (83 aa). The residue at position 65 (lysine 65) is an N6-lipoyllysine.

Belongs to the GcvH family. The glycine cleavage system is composed of four proteins: P, T, L and H. Requires (R)-lipoate as cofactor.

Its function is as follows. The glycine cleavage system catalyzes the degradation of glycine. The H protein shuttles the methylamine group of glycine from the P protein to the T protein. This is Glycine cleavage system H protein from Xylella fastidiosa (strain Temecula1 / ATCC 700964).